Consider the following 156-residue polypeptide: Small ribosomal subunit protein uS7 (156 aa).

Belongs to the universal ribosomal protein uS7 family. Part of the 30S ribosomal subunit. Contacts proteins S9 and S11.

In terms of biological role, one of the primary rRNA binding proteins, it binds directly to 16S rRNA where it nucleates assembly of the head domain of the 30S subunit. Is located at the subunit interface close to the decoding center, probably blocks exit of the E-site tRNA. This Anaeromyxobacter sp. (strain Fw109-5) protein is Small ribosomal subunit protein uS7.